The chain runs to 347 residues: Heat-inducible transcription repressor HrcA (347 aa).

The protein belongs to the HrcA family.

Functionally, negative regulator of class I heat shock genes (grpE-dnaK-dnaJ and groELS operons). Prevents heat-shock induction of these operons. The sequence is that of Heat-inducible transcription repressor HrcA from Mycobacterium sp. (strain JLS).